A 349-amino-acid polypeptide reads, in one-letter code: N-lysine methyltransferase KMT5A (349 aa).

Positions 18 to 46 (AAVAATAPGPEMVEQRGPGRPRSDGENVF) are disordered. Position 57 is a phosphoserine (S57). Residues 65-207 (RSPLQEENSV…SEERKKNELI (143 aa)) are disordered. Positions 107-119 (VKSDEQKSKDTRR) are enriched in basic and acidic residues. The residue at position 138 (T138) is a Phosphothreonine. Basic residues predominate over residues 154 to 170 (ALKKSLKGKQAPRKKSQ). Basic and acidic residues predominate over residues 192–207 (SKAELQSEERKKNELI). The SET domain maps to 213–334 (EGMKIDLIDG…AGEELLYDYG (122 aa)). Residues 223–225 (KGR), Y268, and 295–296 (NH) contribute to the S-adenosyl-L-methionine site.

It belongs to the class V-like SAM-binding methyltransferase superfamily. Histone-lysine methyltransferase family. PR/SET subfamily. In terms of assembly, interacts with L3MBTL1. Interacts with SIRT2 (phosphorylated form); the interaction is direct, stimulates KMT5A-mediated methyltransferase activity at histone H4 'Lys-20' (H4K20me1) and is increased in a H(2)O(2)-induced oxidative stress-dependent manner. In terms of processing, ubiquitinated and degraded by the DCX(DTL) complex.

The protein resides in the nucleus. Its subcellular location is the chromosome. It catalyses the reaction L-lysyl(20)-[histone H4] + S-adenosyl-L-methionine = N(6)-methyl-L-lysyl(20)-[histone H4] + S-adenosyl-L-homocysteine + H(+). It carries out the reaction L-lysyl-[protein] + S-adenosyl-L-methionine = N(6)-methyl-L-lysyl-[protein] + S-adenosyl-L-homocysteine + H(+). In terms of biological role, protein-lysine N-methyltransferase that monomethylates both histones and non-histone proteins. Specifically monomethylates 'Lys-20' of histone H4 (H4K20me1). H4K20me1 is enriched during mitosis and represents a specific tag for epigenetic transcriptional repression. Mainly functions in euchromatin regions, thereby playing a central role in the silencing of euchromatic genes. Required for cell proliferation, probably by contributing to the maintenance of proper higher-order structure of DNA during mitosis. Involved in chromosome condensation and proper cytokinesis. Nucleosomes are preferred as substrate compared to free histones. Mediates monomethylation of p53/TP53 at 'Lys-382', leading to repress p53/TP53-target genes. Plays a negative role in TGF-beta response regulation and a positive role in cell migration. This is N-lysine methyltransferase KMT5A from Mus musculus (Mouse).